The following is a 289-amino-acid chain: 2-dehydro-3-deoxyphosphooctonate aldolase (289 aa).

This sequence belongs to the KdsA family.

It is found in the cytoplasm. It carries out the reaction D-arabinose 5-phosphate + phosphoenolpyruvate + H2O = 3-deoxy-alpha-D-manno-2-octulosonate-8-phosphate + phosphate. It functions in the pathway carbohydrate biosynthesis; 3-deoxy-D-manno-octulosonate biosynthesis; 3-deoxy-D-manno-octulosonate from D-ribulose 5-phosphate: step 2/3. The protein operates within bacterial outer membrane biogenesis; lipopolysaccharide biosynthesis. The sequence is that of 2-dehydro-3-deoxyphosphooctonate aldolase from Cupriavidus necator (strain ATCC 17699 / DSM 428 / KCTC 22496 / NCIMB 10442 / H16 / Stanier 337) (Ralstonia eutropha).